Here is a 251-residue protein sequence, read N- to C-terminus: Tyrosine transport ATP-binding protein (251 aa).

In terms of domain architecture, ABC transporter spans 2-248; the sequence is LQIKNLSKSF…TVEEILEKFE (247 aa). 39–46 serves as a coordination point for ATP; it reads GSNGTGKS.

This sequence belongs to the ABC transporter superfamily. As to quaternary structure, the complex is probably composed of two ATP-binding proteins (CDR20291_0806), two transmembrane proteins (CDR20291_0807) and a solute-binding protein (CDR20291_0805).

The protein resides in the cell membrane. The catalysed reaction is L-tyrosine(out) + ATP + H2O = L-tyrosine(in) + ADP + phosphate + H(+). Functionally, probably part of an ABC transporter complex involved in tyrosine uptake. May also import phenylalanine. Probably responsible for energy coupling to the transport system. The polypeptide is Tyrosine transport ATP-binding protein (Clostridioides difficile (strain R20291) (Peptoclostridium difficile)).